We begin with the raw amino-acid sequence, 218 residues long: Glutathione S-transferase U22 (218 aa).

Position 2 is an N-acetylalanine (Ala-2). The GST N-terminal domain occupies 3–82 (DEVILLDFWP…YIDEVWSDKN (80 aa)). Glutathione is bound by residues 13 to 14 (SP), 39 to 40 (DK), 53 to 54 (KI), and 66 to 67 (ES). The region spanning 88-208 (DPYQRAQARF…LHDSEKILAF (121 aa)) is the GST C-terminal domain. A Phosphothreonine modification is found at Thr-149.

This sequence belongs to the GST superfamily. Tau family.

The protein resides in the cytoplasm. It localises to the cytosol. The enzyme catalyses RX + glutathione = an S-substituted glutathione + a halide anion + H(+). May be involved in the conjugation of reduced glutathione to a wide number of exogenous and endogenous hydrophobic electrophiles and have a detoxification role against certain herbicides. The sequence is that of Glutathione S-transferase U22 (GSTU22) from Arabidopsis thaliana (Mouse-ear cress).